The following is a 131-amino-acid chain: MPVTDSIADFITRIRNAGSAKNKTTDIPYTRVRENLSKLLLEKGYIKNYTVITSEQFPFIRVELKYMQDGQHAIKEISRVSKPGRRVYQGKDIKRYLGGLGLFILSTSKGILTDKEAREQNVGGEVLFRIY.

This sequence belongs to the universal ribosomal protein uS8 family. As to quaternary structure, part of the 30S ribosomal subunit. Contacts proteins S5 and S12.

Functionally, one of the primary rRNA binding proteins, it binds directly to 16S rRNA central domain where it helps coordinate assembly of the platform of the 30S subunit. This chain is Small ribosomal subunit protein uS8, found in Chlorobaculum tepidum (strain ATCC 49652 / DSM 12025 / NBRC 103806 / TLS) (Chlorobium tepidum).